Here is a 743-residue protein sequence, read N- to C-terminus: 1,4-alpha-glucan branching enzyme GlgB (743 aa).

Catalysis depends on Asp-416, which acts as the Nucleophile. The active-site Proton donor is Glu-469.

It belongs to the glycosyl hydrolase 13 family. GlgB subfamily. In terms of assembly, monomer.

It carries out the reaction Transfers a segment of a (1-&gt;4)-alpha-D-glucan chain to a primary hydroxy group in a similar glucan chain.. It participates in glycan biosynthesis; glycogen biosynthesis. Catalyzes the formation of the alpha-1,6-glucosidic linkages in glycogen by scission of a 1,4-alpha-linked oligosaccharide from growing alpha-1,4-glucan chains and the subsequent attachment of the oligosaccharide to the alpha-1,6 position. In Shewanella baltica (strain OS195), this protein is 1,4-alpha-glucan branching enzyme GlgB.